Reading from the N-terminus, the 291-residue chain is Nucleotide-binding protein PPA0813 (291 aa).

Residue 17–24 (GISGAGRR) participates in ATP binding. 66-69 (DVRS) lines the GTP pocket.

It belongs to the RapZ-like family.

Its function is as follows. Displays ATPase and GTPase activities. The sequence is that of Nucleotide-binding protein PPA0813 from Cutibacterium acnes (strain DSM 16379 / KPA171202) (Propionibacterium acnes).